Consider the following 320-residue polypeptide: R2-like ligand binding oxidase (320 aa).

3 residues coordinate Mn(2+): Glu-68, Glu-101, and His-104. The 3-(O4'-tyrosyl)-valine (Val-Tyr) cross-link spans 71 to 162 (VTKDIQPFMS…AAQVRASVVY (92 aa)). Residue Glu-101 coordinates Fe cation. Positions 167, 202, and 205 each coordinate Fe cation.

Belongs to the ribonucleoside diphosphate reductase small chain family. R2-like ligand binding oxidase subfamily. Homodimer. It depends on Fe cation as a cofactor. Mn(2+) serves as cofactor.

Probable oxidase that might be involved in lipid metabolism. The chain is R2-like ligand binding oxidase (nrdB) from Mycolicibacterium smegmatis (strain ATCC 700084 / mc(2)155) (Mycobacterium smegmatis).